The following is a 325-amino-acid chain: Lipoyl synthase (325 aa).

[4Fe-4S] cluster is bound by residues C72, C77, C83, C98, C102, C105, and S312. A Radical SAM core domain is found at 84-301 (FAGGTATFMI…AEEGERMGFK (218 aa)).

It belongs to the radical SAM superfamily. Lipoyl synthase family. Requires [4Fe-4S] cluster as cofactor.

Its subcellular location is the cytoplasm. The enzyme catalyses [[Fe-S] cluster scaffold protein carrying a second [4Fe-4S](2+) cluster] + N(6)-octanoyl-L-lysyl-[protein] + 2 oxidized [2Fe-2S]-[ferredoxin] + 2 S-adenosyl-L-methionine + 4 H(+) = [[Fe-S] cluster scaffold protein] + N(6)-[(R)-dihydrolipoyl]-L-lysyl-[protein] + 4 Fe(3+) + 2 hydrogen sulfide + 2 5'-deoxyadenosine + 2 L-methionine + 2 reduced [2Fe-2S]-[ferredoxin]. It participates in protein modification; protein lipoylation via endogenous pathway; protein N(6)-(lipoyl)lysine from octanoyl-[acyl-carrier-protein]: step 2/2. Functionally, catalyzes the radical-mediated insertion of two sulfur atoms into the C-6 and C-8 positions of the octanoyl moiety bound to the lipoyl domains of lipoate-dependent enzymes, thereby converting the octanoylated domains into lipoylated derivatives. This is Lipoyl synthase from Azotobacter vinelandii (strain DJ / ATCC BAA-1303).